A 473-amino-acid polypeptide reads, in one-letter code: UDP-N-acetylmuramate--L-alanine ligase (473 aa).

122-128 (GTHGKTT) provides a ligand contact to ATP.

This sequence belongs to the MurCDEF family.

It is found in the cytoplasm. The catalysed reaction is UDP-N-acetyl-alpha-D-muramate + L-alanine + ATP = UDP-N-acetyl-alpha-D-muramoyl-L-alanine + ADP + phosphate + H(+). The protein operates within cell wall biogenesis; peptidoglycan biosynthesis. Cell wall formation. This chain is UDP-N-acetylmuramate--L-alanine ligase, found in Teredinibacter turnerae (strain ATCC 39867 / T7901).